A 552-amino-acid polypeptide reads, in one-letter code: MYDYIIVGAGSAGCVLANRLSADPSKRVCLLEAGPRDTNPLIHMPLGIALLSNSKKLNWAFQTAPQQHLNERSLFWPRGKTLGGSSSINAMVYIRGHEEDYQAWEQAGGEYWGWKRAFALFKKLEHNQRFDKSNYHGTDGELAVSDLKDLNPLSKSFVQAGMEAKISFNGDFNGAHQEGVGFYQVTQKHGQRWSSARAFLHDVIDRPNLDIITEAHATKVLFEDRKAVGVSYIQKNMHQQVKTTDSGEVILSLGAVNTPQLLMLSGVGAAAELKEHGIALVHDLPEVGKNLQDHLDITLMCAANSRTPIGVAFSFIPRGLVGLFSYIFKRKGFLTSNVAESGGFVKSSPERDRPNLQFHFLPTYLKDHGRKIAVGYGYTLHICDLLPKSRGRIGLKSANPMDDPLIDPNYLSDPEDIKTMIAGIKIGRAIFDAPSMAKHFKREIVPGPAVTSDDEIVADIRSRAETIYHPVGTCRMGKDPASVVDPCLQVRGLRNIRVVDASIMPNLVAGNTNAPTIMIAENAAEIIVRKVDMASLDASIGFTRQNLEPELL.

3 to 32 contributes to the FAD binding site; the sequence is DYIIVGAGSAGCVLANRLSADPSKRVCLLE. The active-site Proton acceptor is histidine 469.

This sequence belongs to the GMC oxidoreductase family. FAD is required as a cofactor.

The protein localises to the cell inner membrane. It carries out the reaction a primary alcohol + A = an aldehyde + AH2. In terms of biological role, converts aliphatic medium-chain-length alcohols into aldehydes. May be linked to the electron transfer chain. This Pseudomonas putida (Arthrobacter siderocapsulatus) protein is Alcohol dehydrogenase [acceptor] (alkJ).